The primary structure comprises 237 residues: uncharacterized protein (237 aa).

It belongs to the bactofilin family.

This is an uncharacterized protein from Bacillus subtilis (strain 168).